The primary structure comprises 499 residues: ATP synthase subunit beta, chloroplastic (499 aa).

Position 170–177 (170–177 (GGAGVGKT)) interacts with ATP.

Belongs to the ATPase alpha/beta chains family. F-type ATPases have 2 components, CF(1) - the catalytic core - and CF(0) - the membrane proton channel. CF(1) has five subunits: alpha(3), beta(3), gamma(1), delta(1), epsilon(1). CF(0) has four main subunits: a(1), b(1), b'(1) and c(9-12).

Its subcellular location is the plastid. It is found in the chloroplast thylakoid membrane. The catalysed reaction is ATP + H2O + 4 H(+)(in) = ADP + phosphate + 5 H(+)(out). Produces ATP from ADP in the presence of a proton gradient across the membrane. The catalytic sites are hosted primarily by the beta subunits. In Ipomoea purpurea (Common morning glory), this protein is ATP synthase subunit beta, chloroplastic.